A 141-amino-acid chain; its full sequence is Hemoglobin subunit alpha (141 aa).

One can recognise a Globin domain in the interval 1–141 (VLSPADKSNV…VSTVLTSKYR (141 aa)). At S3 the chain carries Phosphoserine. 2 positions are modified to N6-succinyllysine: K7 and K11. K16 bears the N6-acetyllysine; alternate mark. K16 bears the N6-succinyllysine; alternate mark. Y24 bears the Phosphotyrosine mark. The residue at position 35 (S35) is a Phosphoserine. An N6-succinyllysine modification is found at K40. S49 is modified (phosphoserine). H58 contributes to the O2 binding site. Residue H87 coordinates heme b. S102 bears the Phosphoserine mark. T108 bears the Phosphothreonine mark. A phosphoserine mark is found at S124 and S131. 2 positions are modified to phosphothreonine: T134 and T137. S138 bears the Phosphoserine mark.

Belongs to the globin family. Heterotetramer of two alpha chains and two beta chains. Red blood cells.

Its function is as follows. Involved in oxygen transport from the lung to the various peripheral tissues. In terms of biological role, hemopressin acts as an antagonist peptide of the cannabinoid receptor CNR1. Hemopressin-binding efficiently blocks cannabinoid receptor CNR1 and subsequent signaling. This is Hemoglobin subunit alpha (HBA) from Saguinus oedipus (Cotton-top tamarin).